Consider the following 291-residue polypeptide: Bifunctional protein FolD 1 (291 aa).

NADP(+)-binding positions include 167 to 169 (GAS), isoleucine 192, and isoleucine 233.

Belongs to the tetrahydrofolate dehydrogenase/cyclohydrolase family. Homodimer.

The enzyme catalyses (6R)-5,10-methylene-5,6,7,8-tetrahydrofolate + NADP(+) = (6R)-5,10-methenyltetrahydrofolate + NADPH. The catalysed reaction is (6R)-5,10-methenyltetrahydrofolate + H2O = (6R)-10-formyltetrahydrofolate + H(+). It functions in the pathway one-carbon metabolism; tetrahydrofolate interconversion. In terms of biological role, catalyzes the oxidation of 5,10-methylenetetrahydrofolate to 5,10-methenyltetrahydrofolate and then the hydrolysis of 5,10-methenyltetrahydrofolate to 10-formyltetrahydrofolate. The sequence is that of Bifunctional protein FolD 1 from Pseudomonas putida (strain ATCC 47054 / DSM 6125 / CFBP 8728 / NCIMB 11950 / KT2440).